We begin with the raw amino-acid sequence, 102 residues long: Large ribosomal subunit protein bL21 (102 aa).

It belongs to the bacterial ribosomal protein bL21 family. In terms of assembly, part of the 50S ribosomal subunit. Contacts protein L20.

In terms of biological role, this protein binds to 23S rRNA in the presence of protein L20. The sequence is that of Large ribosomal subunit protein bL21 from Nitratidesulfovibrio vulgaris (strain ATCC 29579 / DSM 644 / CCUG 34227 / NCIMB 8303 / VKM B-1760 / Hildenborough) (Desulfovibrio vulgaris).